Consider the following 211-residue polypeptide: GTP pyrophosphokinase YjbM (211 aa).

Guanosine 3'-diphosphate 5'-triphosphate contacts are provided by residues 21 to 28 (KVKLKGIR), 41 to 42 (EF), and 46 to 48 (RVK). ATP-binding positions include 46–48 (RVK), Ser-52, 56–59 (KARR), Asp-72, and Arg-77. Arg-59 is a binding site for guanosine 3'-diphosphate 5'-triphosphate. Residue Asp-72 coordinates Mg(2+). Residues Arg-105, 112–114 (KES), and His-120 each bind guanosine 3'-diphosphate 5'-triphosphate. Glu-139 acts as the Proton acceptor in catalysis. Residues Asn-148 and 151 to 155 (ATIEH) contribute to the guanosine 3'-diphosphate 5'-triphosphate site.

This sequence belongs to the RelA/SpoT family. In terms of assembly, homotetramer.

The catalysed reaction is GTP + ATP = guanosine 3'-diphosphate 5'-triphosphate + AMP. The enzyme catalyses GDP + ATP = guanosine 3',5'-bis(diphosphate) + AMP. It participates in purine metabolism; ppGpp biosynthesis; ppGpp from GTP: step 1/2. With respect to regulation, allosterically regulated by its own products; pppGpp simulates synthesis 10-fold more than ppGpp. 2 pppGpp molecules bind in a regulatory cleft in the middle of the tetramer in an asymmetric manner. There is a specific contact of Lys-25 to the gamma-phosphate of pppGpp, explaining why pppGpp stimulates activity but ppGpp does not. Its function is as follows. Functions as a (p)ppGpp synthase; GDP can be used instead of GTP, resulting in an increase of (p)ppGpp synthesis. The enzyme binds ATP, then GDP or GTP and catalysis is highly cooperative. In eubacteria ppGpp (guanosine 3'-diphosphate 5'-diphosphate) is a mediator of the stringent response that coordinates a variety of cellular activities in response to changes in nutritional abundance. Probably has a minor role in the stringent response. In Bacillus subtilis (strain 168), this protein is GTP pyrophosphokinase YjbM (yjbM).